A 216-amino-acid chain; its full sequence is 3-keto-L-gulonate-6-phosphate decarboxylase UlaD (216 aa).

Aspartate 11 lines the substrate pocket. Mg(2+) is bound by residues glutamate 33 and aspartate 62. Position 192 (arginine 192) interacts with substrate.

This sequence belongs to the HPS/KGPDC family. KGPDC subfamily. As to quaternary structure, homodimer. Mg(2+) serves as cofactor.

It carries out the reaction 3-dehydro-L-gulonate 6-phosphate + H(+) = L-xylulose 5-phosphate + CO2. It participates in cofactor degradation; L-ascorbate degradation; D-xylulose 5-phosphate from L-ascorbate: step 2/4. In terms of biological role, catalyzes the decarboxylation of 3-keto-L-gulonate-6-P into L-xylulose-5-P. Is involved in the anaerobic L-ascorbate utilization. This Shigella boydii serotype 18 (strain CDC 3083-94 / BS512) protein is 3-keto-L-gulonate-6-phosphate decarboxylase UlaD.